The following is a 350-amino-acid chain: MEKQPQNSRRGLAPREVPPAVGLLLIMALMNTLLYLCLDHFFIAPRQSTVDPTHCPYGHFRIGQMKNCSPWLSCEELRTEVRQLKRVGEGAVKRVFLSEWKEHKVALSQLTSLEMKDDFLHGLQMLKSLQGTHVVTLLGYCEDDNTMLTEYHPLGSLSNLEETLNLSKYQNVNTWQHRLELAMDYVSIINYLHHSPVGTRVMCDSNDLPKTLSQYLLTSNFSILANDLDALPLVNHSSGMLVKCGHRELHGDFVAPEQLWPYGEDVPFHDDLMPSYDEKIDIWKIPDISSFLLGHIEGSDMVRFHLFDIHKACKSQTPSERPTAQDVLETYQKVLDTLRDAMMSQAREML.

The residue at position 1 (methionine 1) is an N-acetylmethionine. Topologically, residues 1-20 (MEKQPQNSRRGLAPREVPPA) are cytoplasmic. A helical; Signal-anchor for type II membrane protein transmembrane segment spans residues 21–43 (VGLLLIMALMNTLLYLCLDHFFI). Over 44-350 (APRQSTVDPT…AMMSQAREML (307 aa)) the chain is Lumenal. Residues 81–350 (VRQLKRVGEG…AMMSQAREML (270 aa)) enclose the Protein kinase domain. Residues asparagine 165, asparagine 220, and asparagine 235 are each glycosylated (N-linked (GlcNAc...) asparagine).

Belongs to the protein kinase superfamily. Ser/Thr protein kinase family. STKL subfamily. In terms of tissue distribution, highest expression is observed in brain, skeletal muscle, kidney and heart in fetal and adult tissues.

It is found in the endoplasmic reticulum membrane. It carries out the reaction 3-O-[beta-D-GalNAc-(1-&gt;3)-beta-D-GlcNAc-(1-&gt;4)-alpha-D-Man]-L-Thr-[protein] + ATP = 3-O-[beta-D-GalNAc-(1-&gt;3)-beta-D-GlcNAc-(1-&gt;4)-(O-6-P-alpha-D-Man)]-Thr-[protein] + ADP + H(+). Protein O-mannose kinase that specifically mediates phosphorylation at the 6-position of an O-mannose of the trisaccharide (N-acetylgalactosamine (GalNAc)-beta-1,3-N-acetylglucosamine (GlcNAc)-beta-1,4-mannose) to generate phosphorylated O-mannosyl trisaccharide (N-acetylgalactosamine-beta-1,3-N-acetylglucosamine-beta-1,4-(phosphate-6-)mannose). Phosphorylated O-mannosyl trisaccharide is a carbohydrate structure present in alpha-dystroglycan (DAG1), which is required for binding laminin G-like domain-containing extracellular proteins with high affinity. Only shows kinase activity when the GalNAc-beta-3-GlcNAc-beta-terminus is linked to the 4-position of O-mannose, suggesting that this disaccharide serves as the substrate recognition motif. This is Protein O-mannose kinase (POMK) from Homo sapiens (Human).